The primary structure comprises 33 residues: Cytochrome b6-f complex subunit 8 (33 aa).

The helical transmembrane segment at 2–22 (LFTVAWASLAAMFSFSIAMVV) threads the bilayer.

This sequence belongs to the PetN family. As to quaternary structure, the 4 large subunits of the cytochrome b6-f complex are cytochrome b6, subunit IV (17 kDa polypeptide, PetD), cytochrome f and the Rieske protein, while the 4 small subunits are PetG, PetL, PetM and PetN. The complex functions as a dimer.

It is found in the cellular thylakoid membrane. Functionally, component of the cytochrome b6-f complex, which mediates electron transfer between photosystem II (PSII) and photosystem I (PSI), cyclic electron flow around PSI, and state transitions. The sequence is that of Cytochrome b6-f complex subunit 8 from Parasynechococcus marenigrum (strain WH8102).